A 430-amino-acid chain; its full sequence is MSVLIRGVRPYGEGERVDVLVDDGQIAQIGPDLAIPDTADVIDATGHVLLPGFVDLHTHLREPGREYAEDIETGSAAAALGGYTAVFAMANTNPVADSPVVTDHVWHRGQQVGLVDVHPVGAVTVGLAGAELTEMGMMNAGAAQVRMFSDDGVCVHDPLIMRRALEYATGLGVLIAQHAEEPRLTVGAVAHEGPMAARLGLAGWPRAAEESIVARDALLARDAGARVHICHASAAGTVEILKWAKDQGISITAEVTPHHLLLDDARLASYDGVNRVNPPLREASDAVALRQALADGIIDCVATDHAPHAEHEKCVEFAAARPGMLGLQTALSVVVQTMVAPGLLSWRDIARVMSENPACIARLPDQGRPLEVGEPANLTVVDPDATWTVTGADLASRSANTPFESMSLPATVTATLLRGKVTARDGKIRA.

Zn(2+) is bound by residues histidine 57 and histidine 59. Residues 59–61 and asparagine 91 contribute to the substrate site; that span reads HLR. 3 residues coordinate Zn(2+): aspartate 151, histidine 178, and histidine 231. Asparagine 277 serves as a coordination point for substrate. Aspartate 304 lines the Zn(2+) pocket. Aspartate 304 is an active-site residue. Residues histidine 308 and 322 to 323 each bind substrate; that span reads PG.

It belongs to the metallo-dependent hydrolases superfamily. DHOase family. Class I DHOase subfamily. The cofactor is Zn(2+).

It catalyses the reaction (S)-dihydroorotate + H2O = N-carbamoyl-L-aspartate + H(+). It participates in pyrimidine metabolism; UMP biosynthesis via de novo pathway; (S)-dihydroorotate from bicarbonate: step 3/3. Its function is as follows. Catalyzes the reversible cyclization of carbamoyl aspartate to dihydroorotate. The sequence is that of Dihydroorotase from Mycobacterium tuberculosis (strain ATCC 25618 / H37Rv).